Here is a 123-residue protein sequence, read N- to C-terminus: Large ribosomal subunit protein bL17 (123 aa).

Belongs to the bacterial ribosomal protein bL17 family. As to quaternary structure, part of the 50S ribosomal subunit. Contacts protein L32.

This Mycoplasma genitalium (strain ATCC 33530 / DSM 19775 / NCTC 10195 / G37) (Mycoplasmoides genitalium) protein is Large ribosomal subunit protein bL17.